We begin with the raw amino-acid sequence, 48 residues long: uncharacterized protein (48 aa).

A disordered region spans residues 1–48 (MTKIPINIPATSGKIKFGITPSSNKSPSLSPSPSNGQLGGGRGYILEP). Over residues 21–36 (PSSNKSPSLSPSPSNG) the composition is skewed to low complexity. A compositionally biased stretch (gly residues) spans 37 to 48 (QLGGGRGYILEP).

This is an uncharacterized protein from Dictyostelium discoideum (Social amoeba).